A 469-amino-acid chain; its full sequence is 3-isopropylmalate dehydratase large subunit (469 aa).

[4Fe-4S] cluster is bound by residues cysteine 350, cysteine 410, and cysteine 413.

Belongs to the aconitase/IPM isomerase family. LeuC type 1 subfamily. In terms of assembly, heterodimer of LeuC and LeuD. Requires [4Fe-4S] cluster as cofactor.

It catalyses the reaction (2R,3S)-3-isopropylmalate = (2S)-2-isopropylmalate. The protein operates within amino-acid biosynthesis; L-leucine biosynthesis; L-leucine from 3-methyl-2-oxobutanoate: step 2/4. Its function is as follows. Catalyzes the isomerization between 2-isopropylmalate and 3-isopropylmalate, via the formation of 2-isopropylmaleate. This is 3-isopropylmalate dehydratase large subunit from Rhizobium rhizogenes (strain K84 / ATCC BAA-868) (Agrobacterium radiobacter).